A 314-amino-acid polypeptide reads, in one-letter code: Ficolin-2 (314 aa).

Positions 1-17 (MALGSAALFVLTLTVHA) are cleaved as a signal peptide. One can recognise a Collagen-like domain in the interval 40 to 96 (GCPGLPGAAGPKGEAGAKGDRGESGLPGIPGKEGPTGPKGNQGEKGIRGEKGDSGPS). The segment at 49-101 (GPKGEAGAKGDRGESGLPGIPGKEGPTGPKGNQGEKGIRGEKGDSGPSQSCAT) is disordered. Positions 97–314 (QSCATGPRTC…KVSEMKVRLI (218 aa)) constitute a Fibrinogen C-terminal domain. Cystine bridges form between C99–C127 and C106–C134. D250, D252, S254, and S256 together coordinate Ca(2+). C258 and C271 are oxidised to a cystine. N301 carries an N-linked (GlcNAc...) asparagine glycan.

Belongs to the ficolin lectin family. In terms of assembly, homotrimer. Interacts with elastin. Interacts with MASP1 and MASP2.

It localises to the secreted. In terms of biological role, may function in innate immunity through activation of the lectin complement pathway. Calcium-dependent and GlcNAc-binding lectin. This is Ficolin-2 (Fcn2) from Mus musculus (Mouse).